We begin with the raw amino-acid sequence, 135 residues long: Snaclec echicetin subunit alpha (135 aa).

Residues 1–4 form the signal peptide; sequence GADE. 3 disulfides stabilise this stretch: cysteine 6–cysteine 17, cysteine 34–cysteine 129, and cysteine 104–cysteine 121. Residues 13-130 form the C-type lectin domain; it reads NGVYCYMLFK…CENTFPFMCK (118 aa).

It belongs to the snaclec family. As to quaternary structure, heterodimer of subunits alpha and beta; disulfide-linked. Expressed by the venom gland.

The protein localises to the secreted. In terms of biological role, binding of echicetin to GPIbalpha (GP1BA) receptor on platelets alone results in inhibition of platelet aggregation, while binding to both GP1BA receptor and IgMk promotes platelet aggregation and signal transduction. In Echis carinatus (Saw-scaled viper), this protein is Snaclec echicetin subunit alpha.